Consider the following 318-residue polypeptide: Acetyl-coenzyme A carboxylase carboxyl transferase subunit alpha (318 aa).

Positions 38 to 292 constitute a CoA carboxyltransferase C-terminal domain; sequence ALDRKAEEML…GEAIAAMLGE (255 aa).

It belongs to the AccA family. Acetyl-CoA carboxylase is a heterohexamer composed of biotin carboxyl carrier protein (AccB), biotin carboxylase (AccC) and two subunits each of ACCase subunit alpha (AccA) and ACCase subunit beta (AccD).

It is found in the cytoplasm. The catalysed reaction is N(6)-carboxybiotinyl-L-lysyl-[protein] + acetyl-CoA = N(6)-biotinyl-L-lysyl-[protein] + malonyl-CoA. It participates in lipid metabolism; malonyl-CoA biosynthesis; malonyl-CoA from acetyl-CoA: step 1/1. Component of the acetyl coenzyme A carboxylase (ACC) complex. First, biotin carboxylase catalyzes the carboxylation of biotin on its carrier protein (BCCP) and then the CO(2) group is transferred by the carboxyltransferase to acetyl-CoA to form malonyl-CoA. This chain is Acetyl-coenzyme A carboxylase carboxyl transferase subunit alpha, found in Paracoccus denitrificans (strain Pd 1222).